The sequence spans 360 residues: Phospho-N-acetylmuramoyl-pentapeptide-transferase (360 aa).

A run of 10 helical transmembrane segments spans residues 26–46 (AIVSLLTALFISLWMGPRMIA), 72–92 (PTMGGIMILTAIVVSVLLWAY), 94–114 (SNPYVWCVLVVLVGYGIIGFV), 132–152 (WKYFWMSVIALGVAFALYLAG), 168–188 (VMPQLGLFYVLLAYFVIVGTG), 199–219 (GLAIMPTVFVAAGFALVAWAT), 236–256 (AGELVIVCTAIVGAGLGFLWF), 263–283 (VFMGDVGSLALGGALGIIAVL), 288–308 (FLLVIMGGVFVVETLSVILQV), and 338–358 (VIVRFWIISLMLVLIGLATLK).

This sequence belongs to the glycosyltransferase 4 family. MraY subfamily. It depends on Mg(2+) as a cofactor.

Its subcellular location is the cell inner membrane. It carries out the reaction UDP-N-acetyl-alpha-D-muramoyl-L-alanyl-gamma-D-glutamyl-meso-2,6-diaminopimeloyl-D-alanyl-D-alanine + di-trans,octa-cis-undecaprenyl phosphate = di-trans,octa-cis-undecaprenyl diphospho-N-acetyl-alpha-D-muramoyl-L-alanyl-D-glutamyl-meso-2,6-diaminopimeloyl-D-alanyl-D-alanine + UMP. It participates in cell wall biogenesis; peptidoglycan biosynthesis. Catalyzes the initial step of the lipid cycle reactions in the biosynthesis of the cell wall peptidoglycan: transfers peptidoglycan precursor phospho-MurNAc-pentapeptide from UDP-MurNAc-pentapeptide onto the lipid carrier undecaprenyl phosphate, yielding undecaprenyl-pyrophosphoryl-MurNAc-pentapeptide, known as lipid I. The polypeptide is Phospho-N-acetylmuramoyl-pentapeptide-transferase (Citrobacter koseri (strain ATCC BAA-895 / CDC 4225-83 / SGSC4696)).